The following is a 159-amino-acid chain: Calcium-binding protein CML39 (159 aa).

EF-hand domains lie at 18-53 (EKNR…LGEQ), 54-89 (MSDE…NDEF), 93-128 (EKKR…LGES), and 129-159 (RTTD…LMMR). Ca(2+)-binding residues include aspartate 31, asparagine 33, aspartate 35, arginine 37, glutamate 42, aspartate 67, aspartate 69, aspartate 71, methionine 73, and glutamate 78. Aspartate 142, asparagine 144, aspartate 146, and glutamate 153 together coordinate Ca(2+).

Expressed in the zones of elongation and differentiation in seedling roots and at the root-hypocotyl junction. Expressed from stage 12 of flower development in anthers, specifically in pollen.

Potential calcium sensor that binds calcium in vitro. The protein is Calcium-binding protein CML39 (CML39) of Arabidopsis thaliana (Mouse-ear cress).